Here is a 417-residue protein sequence, read N- to C-terminus: MSSATDFDPKPRRSSVAVDVGGVIVGGGAPVVVQSMTNTDTADIDSTVAQVAALFKAGSELVRITVDRDESAAAVPKIRERLLRLGMDVPLIGDFHYIGHKLLADHPACAEALAKYRINPGNVGFKDKKDKQFAEIIEMAIRYDKPVRIGVNWGSLDQDLLTALMDQNSAAGSPLSARQVTRETIVQSALISADLAEEIGLPRNRIILSAKVSQVQDLIAVYSMLSERSNHALHLGLTEAGMGSKGIVASSAAMGYVLQHGIGDTVRVSLTPEPNGDRTREVQVAQELLQVMGFRQFVPVVAACPGCGRTTSTVFQELAQNIQNDLRKNMPVWRDKYPGVEALNVAVMGCIVNGPGESKHADIGISLPGTGESPAAPVFIDGQKAMTLRGPNIASDFEALVADYIEKRFGQKSVAAE.

Positions 304, 307, 350, and 357 each coordinate [4Fe-4S] cluster.

It belongs to the IspG family. [4Fe-4S] cluster serves as cofactor.

It carries out the reaction (2E)-4-hydroxy-3-methylbut-2-enyl diphosphate + oxidized [flavodoxin] + H2O + 2 H(+) = 2-C-methyl-D-erythritol 2,4-cyclic diphosphate + reduced [flavodoxin]. It participates in isoprenoid biosynthesis; isopentenyl diphosphate biosynthesis via DXP pathway; isopentenyl diphosphate from 1-deoxy-D-xylulose 5-phosphate: step 5/6. In terms of biological role, converts 2C-methyl-D-erythritol 2,4-cyclodiphosphate (ME-2,4cPP) into 1-hydroxy-2-methyl-2-(E)-butenyl 4-diphosphate. This is 4-hydroxy-3-methylbut-2-en-1-yl diphosphate synthase (flavodoxin) from Rhizobium rhizogenes (strain K84 / ATCC BAA-868) (Agrobacterium radiobacter).